The primary structure comprises 137 residues: Large ribosomal subunit protein uL16 (137 aa).

This sequence belongs to the universal ribosomal protein uL16 family. In terms of assembly, part of the 50S ribosomal subunit.

Its function is as follows. Binds 23S rRNA and is also seen to make contacts with the A and possibly P site tRNAs. The protein is Large ribosomal subunit protein uL16 of Sorangium cellulosum (strain So ce56) (Polyangium cellulosum (strain So ce56)).